The sequence spans 494 residues: UDP-N-acetylmuramoyl-L-alanyl-D-glutamate--L-lysine ligase (494 aa).

S30 contributes to the UDP-N-acetyl-alpha-D-muramoyl-L-alanyl-D-glutamate binding site. 110-116 (GTNGKTS) serves as a coordination point for ATP. Residues 152–153 (TT), S179, and R187 each bind UDP-N-acetyl-alpha-D-muramoyl-L-alanyl-D-glutamate. An N6-carboxylysine modification is found at K219. The L-lysine recognition motif signature appears at 406–409 (DNPA).

Belongs to the MurCDEF family. MurE subfamily. Post-translationally, carboxylation is probably crucial for Mg(2+) binding and, consequently, for the gamma-phosphate positioning of ATP.

Its subcellular location is the cytoplasm. The enzyme catalyses UDP-N-acetyl-alpha-D-muramoyl-L-alanyl-D-glutamate + L-lysine + ATP = UDP-N-acetyl-alpha-D-muramoyl-L-alanyl-gamma-D-glutamyl-L-lysine + ADP + phosphate + H(+). The protein operates within cell wall biogenesis; peptidoglycan biosynthesis. Catalyzes the addition of L-lysine to the nucleotide precursor UDP-N-acetylmuramoyl-L-alanyl-D-glutamate (UMAG) in the biosynthesis of bacterial cell-wall peptidoglycan. In Staphylococcus aureus (strain MW2), this protein is UDP-N-acetylmuramoyl-L-alanyl-D-glutamate--L-lysine ligase.